The primary structure comprises 810 residues: Protein kinase C-binding protein NELL1 (810 aa).

The signal sequence occupies residues Met-1–Gly-21. N-linked (GlcNAc...) asparagine glycosylation is found at Asn-40, Asn-53, Asn-83, Asn-224, Asn-294, and Asn-372. The 171-residue stretch at Ala-57–Cys-227 folds into the Laminin G-like domain. The VWFC 1 domain occupies Lys-271–Arg-332. 3 disulfides stabilise this stretch: Cys-395/Cys-407, Cys-401/Cys-416, and Cys-418/Cys-432. Positions 434, 435, and 437 each coordinate Ca(2+). The EGF-like 1; calcium-binding domain occupies Asp-434–Thr-475. 15 disulfides stabilise this stretch: Cys-438–Cys-451, Cys-445–Cys-460, Cys-462–Cys-474, Cys-480–Cys-493, Cys-487–Cys-502, Cys-504–Cys-515, Cys-519–Cys-529, Cys-523–Cys-535, Cys-537–Cys-546, Cys-553–Cys-566, Cys-560–Cys-575, Cys-577–Cys-594, Cys-600–Cys-613, Cys-607–Cys-622, and Cys-624–Cys-630. The Ca(2+) site is built by Asn-453, Leu-454, and Leu-457. The EGF-like 2; calcium-binding domain maps to Glu-476–Lys-516. Asn-511 carries N-linked (GlcNAc...) asparagine glycosylation. One can recognise an EGF-like 3 domain in the interval Ala-517 to Glu-547. The EGF-like 4; calcium-binding domain maps to Asp-549 to Tyr-587. An N-linked (GlcNAc...) asparagine glycan is attached at Asn-562. The EGF-like 5; calcium-binding domain occupies Asp-596–Ser-631. Asn-609 carries an N-linked (GlcNAc...) asparagine glycan. VWFC domains are found at residues Gly-632–Asp-687 and Ser-692–Val-750. N-linked (GlcNAc...) asparagine glycosylation occurs at Asn-708.

As to quaternary structure, homotrimer. Binds to PKC beta-1. Interacts with ATRAID; the interaction promotes osteoblast cell differentiation and mineralization. Interacts with ROBO3.

The protein resides in the cytoplasm. Its subcellular location is the nucleus envelope. It is found in the secreted. Functionally, plays a role in the control of cell growth and differentiation. Promotes osteoblast cell differentiation and terminal mineralization. In Mus musculus (Mouse), this protein is Protein kinase C-binding protein NELL1 (Nell1).